A 199-amino-acid polypeptide reads, in one-letter code: LIM domain-containing protein WLIM2b (199 aa).

2 consecutive LIM zinc-binding domains span residues 8–68 (QKCK…LFKE) and 106–166 (EKCA…LFKE).

As to quaternary structure, interacts with F-actin. Expressed in roots, leaves, stems, flowers and siliques. Barely detected in pollen.

The protein localises to the cytoplasm. It is found in the cytoskeleton. Its function is as follows. Binds to actin filaments and promotes cross-linking into thick bundles. Has an actin-stabilizing activity. The actin regulatory activities are not regulated by pH and [Ca(2+)]. The protein is LIM domain-containing protein WLIM2b of Arabidopsis thaliana (Mouse-ear cress).